We begin with the raw amino-acid sequence, 744 residues long: NAD(P)H-quinone oxidoreductase subunit 5, chloroplastic (744 aa).

16 helical membrane-spanning segments follow: residues tryptophan 9 to phenylalanine 29, tryptophan 40 to isoleucine 60, leucine 88 to leucine 108, phenylalanine 125 to isoleucine 145, isoleucine 147 to threonine 167, glycine 185 to phenylalanine 205, asparagine 219 to alanine 239, threonine 258 to alanine 278, isoleucine 290 to glutamine 312, leucine 327 to isoleucine 347, alanine 354 to serine 374, threonine 396 to serine 416, tryptophan 425 to tyrosine 445, methionine 548 to proline 568, isoleucine 608 to valine 628, and tyrosine 724 to phenylalanine 744.

This sequence belongs to the complex I subunit 5 family. NDH is composed of at least 16 different subunits, 5 of which are encoded in the nucleus.

The protein resides in the plastid. Its subcellular location is the chloroplast thylakoid membrane. It catalyses the reaction a plastoquinone + NADH + (n+1) H(+)(in) = a plastoquinol + NAD(+) + n H(+)(out). It carries out the reaction a plastoquinone + NADPH + (n+1) H(+)(in) = a plastoquinol + NADP(+) + n H(+)(out). Its function is as follows. NDH shuttles electrons from NAD(P)H:plastoquinone, via FMN and iron-sulfur (Fe-S) centers, to quinones in the photosynthetic chain and possibly in a chloroplast respiratory chain. The immediate electron acceptor for the enzyme in this species is believed to be plastoquinone. Couples the redox reaction to proton translocation, and thus conserves the redox energy in a proton gradient. This chain is NAD(P)H-quinone oxidoreductase subunit 5, chloroplastic (ndhF), found in Dampiera diversifolia (Blue dampiera).